The chain runs to 297 residues: Diaminopimelate epimerase (297 aa).

N13, Q46, and N66 together coordinate substrate. C76 (proton donor) is an active-site residue. Substrate contacts are provided by residues 77–78 (GN), N174, N207, and 225–226 (ER). The active-site Proton acceptor is the C234. 235–236 (GT) provides a ligand contact to substrate.

The protein belongs to the diaminopimelate epimerase family. Homodimer.

It localises to the cytoplasm. The enzyme catalyses (2S,6S)-2,6-diaminopimelate = meso-2,6-diaminopimelate. It participates in amino-acid biosynthesis; L-lysine biosynthesis via DAP pathway; DL-2,6-diaminopimelate from LL-2,6-diaminopimelate: step 1/1. Its function is as follows. Catalyzes the stereoinversion of LL-2,6-diaminopimelate (L,L-DAP) to meso-diaminopimelate (meso-DAP), a precursor of L-lysine and an essential component of the bacterial peptidoglycan. In Leptothrix cholodnii (strain ATCC 51168 / LMG 8142 / SP-6) (Leptothrix discophora (strain SP-6)), this protein is Diaminopimelate epimerase.